A 299-amino-acid polypeptide reads, in one-letter code: dTDP-4-dehydrorhamnose reductase (299 aa).

NADH contacts are provided by residues Gly-10 to Val-12, Asp-30, Asp-39 to Phe-40, and Ala-63 to Thr-65. NADPH is bound at residue Gln-11–Val-12. Residues Asp-39–Phe-40, Ala-63–Thr-65, and Tyr-102 contribute to the NADPH site. Thr-104–Asp-105 provides a ligand contact to dTDP-beta-L-rhamnose. NADH is bound by residues Tyr-128 and Lys-132. Positions 128 and 132 each coordinate NADPH. Tyr-128 acts as the Proton donor/acceptor in catalysis. Trp-153 provides a ligand contact to dTDP-beta-L-rhamnose.

Belongs to the dTDP-4-dehydrorhamnose reductase family. Homodimer. The cofactor is Mg(2+).

The catalysed reaction is dTDP-beta-L-rhamnose + NADP(+) = dTDP-4-dehydro-beta-L-rhamnose + NADPH + H(+). Its pathway is carbohydrate biosynthesis; dTDP-L-rhamnose biosynthesis. It participates in bacterial outer membrane biogenesis; LPS O-antigen biosynthesis. Involved in the biosynthesis of the dTDP-L-rhamnose which is an important component of lipopolysaccharide (LPS). Catalyzes the reduction of dTDP-6-deoxy-L-lyxo-4-hexulose to yield dTDP-L-rhamnose. RmlD uses NADH and NADPH nearly equally well. The protein is dTDP-4-dehydrorhamnose reductase (rfbD) of Salmonella typhimurium (strain LT2 / SGSC1412 / ATCC 700720).